Reading from the N-terminus, the 641-residue chain is Histone-lysine N-methyltransferase set9 (641 aa).

One can recognise an SET domain in the interval 120-234 (CPFEVTTTNR…IGEEITVSYG (115 aa)). Disordered stretches follow at residues 261 to 388 (NLAP…STAA) and 596 to 628 (GVSFGLTPTPELSDMRSETPDSEALDERGNTRV). The span at 348–359 (AGDSGKSSSAGD) shows a compositional bias: low complexity. The span at 361-381 (VESSGTDSESLTSITPQESQR) shows a compositional bias: polar residues. Positions 608-625 (SDMRSETPDSEALDERGN) are enriched in basic and acidic residues.

It belongs to the class V-like SAM-binding methyltransferase superfamily. Histone-lysine methyltransferase family. Suvar4-20 subfamily.

The protein localises to the nucleus. The protein resides in the chromosome. It catalyses the reaction L-lysyl(20)-[histone H4] + 3 S-adenosyl-L-methionine = N(6),N(6),N(6)-trimethyl-L-lysyl(20)-[histone H4] + 3 S-adenosyl-L-homocysteine + 3 H(+). Functionally, histone methyltransferase that trimethylates 'Lys-20' of histone H4 to form H4K20me3. This Emericella nidulans (strain FGSC A4 / ATCC 38163 / CBS 112.46 / NRRL 194 / M139) (Aspergillus nidulans) protein is Histone-lysine N-methyltransferase set9 (set9).